The sequence spans 61 residues: Translational regulator CsrA (61 aa).

The protein belongs to the CsrA/RsmA family. Homodimer; the beta-strands of each monomer intercalate to form a hydrophobic core, while the alpha-helices form wings that extend away from the core.

The protein resides in the cytoplasm. A key translational regulator that binds mRNA to regulate translation initiation and/or mRNA stability. Mediates global changes in gene expression, shifting from rapid growth to stress survival by linking envelope stress, the stringent response and the catabolite repression systems. Usually binds in the 5'-UTR; binding at or near the Shine-Dalgarno sequence prevents ribosome-binding, repressing translation, binding elsewhere in the 5'-UTR can activate translation and/or stabilize the mRNA. Its function is antagonized by small RNA(s). The chain is Translational regulator CsrA from Glaesserella parasuis serovar 5 (strain SH0165) (Haemophilus parasuis).